Here is a 356-residue protein sequence, read N- to C-terminus: Fructose import permease protein FruF (356 aa).

The next 7 membrane-spanning stretches (helical) occupy residues 25-45, 77-97, 113-133, 180-200, 231-251, 268-290, and 308-328; these read IVAF…FLAL, LVIS…VAGA, ILIA…LVSF, FILG…LVGL, ILFL…LFAT, MYAI…SLAG, and LGVN…VICV.

The protein belongs to the binding-protein-dependent transport system permease family. The complex is composed of an ATP-binding protein (FruK), two transmembrane proteins (FruF and FruG) and a solute-binding protein (FruE).

The protein localises to the cell membrane. Functionally, part of the high-affinity ABC transporter complex FruEKFG involved in fructose uptake. Can also transport ribose and xylose, with lower affinity. Probably responsible for the translocation of the substrate across the membrane. The sequence is that of Fructose import permease protein FruF from Bifidobacterium longum (strain NCC 2705).